Reading from the N-terminus, the 144-residue chain is 3-hydroxyacyl-[acyl-carrier-protein] dehydratase FabZ (144 aa).

Residue H51 is part of the active site.

Belongs to the thioester dehydratase family. FabZ subfamily.

The protein localises to the cytoplasm. It carries out the reaction a (3R)-hydroxyacyl-[ACP] = a (2E)-enoyl-[ACP] + H2O. Its function is as follows. Involved in unsaturated fatty acids biosynthesis. Catalyzes the dehydration of short chain beta-hydroxyacyl-ACPs and long chain saturated and unsaturated beta-hydroxyacyl-ACPs. The chain is 3-hydroxyacyl-[acyl-carrier-protein] dehydratase FabZ from Lactococcus lactis subsp. cremoris (strain MG1363).